The sequence spans 338 residues: Gibberellin 2-beta-dioxygenase 8 (338 aa).

Residues 191 to 290 (NTCYLRMNRY…RFSTAYFMCP (100 aa)) enclose the Fe2OG dioxygenase domain. 3 residues coordinate Fe cation: His-215, Asp-217, and His-271. Arg-281 is an active-site residue. Arg-281 lines the 2-oxoglutarate pocket.

This sequence belongs to the iron/ascorbate-dependent oxidoreductase family. GA2OX subfamily. It depends on Fe(2+) as a cofactor.

It carries out the reaction gibberellin A1 + 2-oxoglutarate + O2 = gibberellin A8 + succinate + CO2. It participates in plant hormone biosynthesis; gibberellin biosynthesis. Its function is as follows. Catalyzes the 2-beta-hydroxylation of gibberellins (GA) precursors, rendering them unable to be converted to active GAs. Hydroxylates the C20-GA GA12 and GA53, but is not active on C19-GAs, like GA1, GA4, GA9 and GA20. The protein is Gibberellin 2-beta-dioxygenase 8 (GA2OX8) of Arabidopsis thaliana (Mouse-ear cress).